The following is a 567-amino-acid chain: Polyadenylate-binding protein-interacting protein 7 (567 aa).

A disordered region spans residues 1–22 (MSLTKKASEPKLSGTSIKPTTL). Polar residues predominate over residues 13–22 (SGTSIKPTTL). The PAM2-like motif lies at 21 to 31 (TLNPHAAEFVP). The 45-residue stretch at 215-259 (DMEVNPVDFLASQFPGFAAESLAEVYFANGCDLQLTIEMLTQLEL) folds into the CUE domain. Residues 355 to 387 (RNDSADSSIGSSRNSGAYKSGRGRSIYSDKLQS) form a disordered region. Residues 359 to 371 (ADSSIGSSRNSGA) show a composition bias toward polar residues. A Smr domain is found at 485–567 (IDLHGLHVSE…QAGLLRVIIY (83 aa)).

In terms of assembly, interacts with MPC and PAB2. Expressed in cauline leaves, stems, rosette leaves, immature siliques and primary inflorescences.

This is Polyadenylate-binding protein-interacting protein 7 (CID7) from Arabidopsis thaliana (Mouse-ear cress).